Consider the following 355-residue polypeptide: MLASKLDPFLKRFEELNSLLSSSDILNDISKMTTLSKEQKNLEPIVLKAKEYLKTLDNIEENKALLNDPELGELAKEELKTLEELKPKLEEEIKILLLPKDPNDERNIFLEIRAGTGGDEASLFVGDLVKAYARYAENRGYKLEIVSSSEGSVGGFKEIIMLVKGTGAYSRLKYEGGTHRVQRVPQTESQGRVHTSAITVAVMPEVDDIEIEINPNDLKVDVMRSSGHGGQSVNTTDSAVRITHIPTGIVVVNQDGKSQHKNKESAMKVLKARLYEMQESERLAKESEARKSQVGSGDRSERIRTYNFPQNRISDHRINLTLYRLDAIMQDGLFDEIIEPLITHHQAQALQEQNL.

At Gln231 the chain carries N5-methylglutamine. Residues 280 to 291 (SERLAKESEARK) are compositionally biased toward basic and acidic residues. Residues 280–303 (SERLAKESEARKSQVGSGDRSERI) form a disordered region.

Belongs to the prokaryotic/mitochondrial release factor family. Post-translationally, methylated by PrmC. Methylation increases the termination efficiency of RF1.

It localises to the cytoplasm. Its function is as follows. Peptide chain release factor 1 directs the termination of translation in response to the peptide chain termination codons UAG and UAA. The sequence is that of Peptide chain release factor 1 from Campylobacter jejuni subsp. jejuni serotype O:6 (strain 81116 / NCTC 11828).